A 257-amino-acid polypeptide reads, in one-letter code: 5'-nucleotidase SurE (257 aa).

Residues D9, D10, S40, and N92 each coordinate a divalent metal cation.

This sequence belongs to the SurE nucleotidase family. It depends on a divalent metal cation as a cofactor.

The protein localises to the cytoplasm. The catalysed reaction is a ribonucleoside 5'-phosphate + H2O = a ribonucleoside + phosphate. Nucleotidase that shows phosphatase activity on nucleoside 5'-monophosphates. The polypeptide is 5'-nucleotidase SurE (Alkalilimnicola ehrlichii (strain ATCC BAA-1101 / DSM 17681 / MLHE-1)).